The chain runs to 498 residues: Trichoplein keratin filament-binding protein (498 aa).

The stretch at 11–39 (CSQQRLNQQLARQREQEARLRQQWEQNSR) forms a coiled coil. Residues lysine 50 and lysine 57 each participate in a glycyl lysine isopeptide (Lys-Gly) (interchain with G-Cter in ubiquitin) cross-link. Coiled-coil stretches lie at residues 66–136 (AYQR…LIAE), 163–353 (VNSW…LREE), and 380–479 (LTGR…EAET). The interval 73–498 (KEEKRRSLEA…PYGHPKIAWN (426 aa)) is interaction with keratin proteins. Positions 167 to 189 (EMQKEEKKQQEATAEQENKRYEN) are disordered. Residues 168–189 (MQKEEKKQQEATAEQENKRYEN) show a composition bias toward basic and acidic residues. Residues 259-425 (KQMEAFRQKA…RELARREKEE (167 aa)) form a trichohyalin/plectin homology domain region. Residues 447-498 (QAWEADQQEEEEEEEARRVEQLSDALLQQEAETMAEQGYRPKPYGHPKIAWN) are disordered.

The protein belongs to the TCHP family. As to quaternary structure, interacts specifically with keratin proteins including, KRT5, KRT6A, KRT8, KRT14, KRT16 and KRT18. Interacts with KCTD17. Ubiquitinated. Ubiquitination by the BCR(KCTD17) E3 ubiquitin ligase complex results in proteasomal degradation, and induces ciliogenesis. Expressed at high levels in normal urothelial and breast epithelial cells. Also expressed in the smooth muscle and endothelial cells. Reduced expression seen in advanced bladder and breast carcinomas (at protein level). Ubiquitous. Expressed at highest levels in the heart, skeletal muscle, kidney, liver and testis.

It localises to the cytoplasm. It is found in the cytoskeleton. The protein resides in the cell membrane. Its subcellular location is the mitochondrion. The protein localises to the cell junction. It localises to the desmosome. It is found in the microtubule organizing center. The protein resides in the centrosome. Tumor suppressor which has the ability to inhibit cell growth and be pro-apoptotic during cell stress. Inhibits cell growth in bladder and prostate cancer cells by a down-regulation of HSPB1 by inhibiting its phosphorylation. May act as a 'capping' or 'branching' protein for keratin filaments in the cell periphery. May regulate K8/K18 filament and desmosome organization mainly at the apical or peripheral regions of simple epithelial cells. Is a negative regulator of ciliogenesis. The chain is Trichoplein keratin filament-binding protein from Homo sapiens (Human).